Here is a 211-residue protein sequence, read N- to C-terminus: Adenylate kinase (211 aa).

An ATP-binding site is contributed by 10-15 (GSGKGT). The NMP stretch occupies residues 30 to 59 (STGDMLRAEVSKKSPLGLKAEEYMKQGLLV). AMP-binding positions include Thr31, Arg36, 57–59 (LLV), 84–87 (GFPR), and Gln91. The interval 125 to 162 (GRRVCPKCGATYNIYYQKPKNDTLCDNDATPLIQRDDD) is LID. Arg126 serves as a coordination point for ATP. Positions 129 and 132 each coordinate Zn(2+). Residue 135–136 (TY) coordinates ATP. Zn(2+) is bound by residues Cys149 and Asp152. Residues Arg159 and Arg170 each contribute to the AMP site. ATP is bound at residue Gly198.

Belongs to the adenylate kinase family. In terms of assembly, monomer.

The protein localises to the cytoplasm. It catalyses the reaction AMP + ATP = 2 ADP. It participates in purine metabolism; AMP biosynthesis via salvage pathway; AMP from ADP: step 1/1. Its function is as follows. Catalyzes the reversible transfer of the terminal phosphate group between ATP and AMP. Plays an important role in cellular energy homeostasis and in adenine nucleotide metabolism. In Hydrogenobaculum sp. (strain Y04AAS1), this protein is Adenylate kinase.